Consider the following 445-residue polypeptide: 3-phosphoshikimate 1-carboxyvinyltransferase (445 aa).

3-phosphoshikimate contacts are provided by K34, S35, and R39. K34 lines the phosphoenolpyruvate pocket. Phosphoenolpyruvate-binding residues include G112 and R140. Residues S186, S187, Q188, S216, E331, and H358 each contribute to the 3-phosphoshikimate site. Q188 contributes to the phosphoenolpyruvate binding site. E331 serves as the catalytic Proton acceptor. 3 residues coordinate phosphoenolpyruvate: R362, R403, and K428.

Belongs to the EPSP synthase family. In terms of assembly, monomer.

It localises to the cytoplasm. It carries out the reaction 3-phosphoshikimate + phosphoenolpyruvate = 5-O-(1-carboxyvinyl)-3-phosphoshikimate + phosphate. The protein operates within metabolic intermediate biosynthesis; chorismate biosynthesis; chorismate from D-erythrose 4-phosphate and phosphoenolpyruvate: step 6/7. Functionally, catalyzes the transfer of the enolpyruvyl moiety of phosphoenolpyruvate (PEP) to the 5-hydroxyl of shikimate-3-phosphate (S3P) to produce enolpyruvyl shikimate-3-phosphate and inorganic phosphate. The chain is 3-phosphoshikimate 1-carboxyvinyltransferase from Kocuria rhizophila (strain ATCC 9341 / DSM 348 / NBRC 103217 / DC2201).